We begin with the raw amino-acid sequence, 293 residues long: Xylanase inhibitor protein XIP (293 aa).

The first 21 residues, 1–21 (MALRRLAALLSLAVLLSAGLA), serve as a signal peptide directing secretion. The 263-residue stretch at 31–293 (GDTVIIWGRN…DKKTGFTAHL (263 aa)) folds into the GH18 domain. 2 disulfides stabilise this stretch: Cys-50–Cys-92 and Cys-189–Cys-218.

It belongs to the glycosyl hydrolase 18 family. Xylanase inhibitor subfamily. In terms of tissue distribution, expressed in mature grain.

The protein resides in the secreted. Its function is as follows. Fungal xylanase inhibitor. Possesses competitive inhibiting activity against several fungal endo-1,4-beta-D-xylanases belonging to glycoside hydrolase family 10 (GH10) and family 11 (GH11). May function in plant defense against secreted fungal pathogen xylanases. Is similar to class III chitinases, but does not exhibit chitinase activity. This is Xylanase inhibitor protein XIP from Oryza sativa subsp. japonica (Rice).